Consider the following 414-residue polypeptide: Cyclin-B1-3 (414 aa).

The protein belongs to the cyclin family. Cyclin AB subfamily. Expressed in roots, stems and flowers.

This Arabidopsis thaliana (Mouse-ear cress) protein is Cyclin-B1-3 (CYCB1-3).